A 442-amino-acid polypeptide reads, in one-letter code: SPRY domain-containing protein 3 (442 aa).

In terms of domain architecture, B30.2/SPRY spans 17 to 204 (DLNLHYRFLN…VRLHLNAELG (188 aa)). Residues 371–394 (EGEEEEEEEEEEEDGEEIEPEHEG) are disordered. Acidic residues predominate over residues 372–390 (GEEEEEEEEEEEDGEEIEP).

The polypeptide is SPRY domain-containing protein 3 (SPRYD3) (Pongo abelii (Sumatran orangutan)).